The chain runs to 160 residues: Small ribosomal subunit protein uS7 (160 aa).

It belongs to the universal ribosomal protein uS7 family. As to quaternary structure, part of the 30S ribosomal subunit. Contacts proteins S9 and S11.

Functionally, one of the primary rRNA binding proteins, it binds directly to 16S rRNA where it nucleates assembly of the head domain of the 30S subunit. Is located at the subunit interface close to the decoding center, probably blocks exit of the E-site tRNA. This is Small ribosomal subunit protein uS7 from Rickettsia conorii (strain ATCC VR-613 / Malish 7).